The following is a 487-amino-acid chain: UDP-N-acetylmuramoyl-L-alanyl-D-glutamate--2,6-diaminopimelate ligase (487 aa).

Position 30 (Ser30) interacts with UDP-N-acetyl-alpha-D-muramoyl-L-alanyl-D-glutamate. Position 109–115 (109–115 (GTNGKTS)) interacts with ATP. UDP-N-acetyl-alpha-D-muramoyl-L-alanyl-D-glutamate-binding positions include 151 to 152 (TT), Ser178, and Arg186. Residue Lys218 is modified to N6-carboxylysine. Meso-2,6-diaminopimelate-binding positions include Arg379, 403 to 406 (DNPR), Gly455, and Glu459. The Meso-diaminopimelate recognition motif motif lies at 403 to 406 (DNPR).

This sequence belongs to the MurCDEF family. MurE subfamily. It depends on Mg(2+) as a cofactor. In terms of processing, carboxylation is probably crucial for Mg(2+) binding and, consequently, for the gamma-phosphate positioning of ATP.

Its subcellular location is the cytoplasm. It carries out the reaction UDP-N-acetyl-alpha-D-muramoyl-L-alanyl-D-glutamate + meso-2,6-diaminopimelate + ATP = UDP-N-acetyl-alpha-D-muramoyl-L-alanyl-gamma-D-glutamyl-meso-2,6-diaminopimelate + ADP + phosphate + H(+). Its pathway is cell wall biogenesis; peptidoglycan biosynthesis. In terms of biological role, catalyzes the addition of meso-diaminopimelic acid to the nucleotide precursor UDP-N-acetylmuramoyl-L-alanyl-D-glutamate (UMAG) in the biosynthesis of bacterial cell-wall peptidoglycan. This Alkaliphilus oremlandii (strain OhILAs) (Clostridium oremlandii (strain OhILAs)) protein is UDP-N-acetylmuramoyl-L-alanyl-D-glutamate--2,6-diaminopimelate ligase.